A 420-amino-acid polypeptide reads, in one-letter code: ATP phosphoribosyltransferase regulatory subunit (420 aa).

Belongs to the class-II aminoacyl-tRNA synthetase family. HisZ subfamily. In terms of assembly, heteromultimer composed of HisG and HisZ subunits.

It localises to the cytoplasm. It participates in amino-acid biosynthesis; L-histidine biosynthesis; L-histidine from 5-phospho-alpha-D-ribose 1-diphosphate: step 1/9. In terms of biological role, required for the first step of histidine biosynthesis. May allow the feedback regulation of ATP phosphoribosyltransferase activity by histidine. This Bacillus cereus (strain ZK / E33L) protein is ATP phosphoribosyltransferase regulatory subunit.